We begin with the raw amino-acid sequence, 1915 residues long: Ankyrin repeat domain-containing protein 36A (1915 aa).

6 ANK repeats span residues 31-60, 64-93, 97-126, 130-159, 163-192, and 196-225; these read YHLK…DANK, KERT…ELNL, EDRT…NPNI, FGRT…NIEE, CEYQ…NVNA, and LGRS…DVLS. Disordered regions lie at residues 261–331, 470–619, 639–663, 676–1203, and 1285–1304; these read PINS…DEQK, ATGQ…QKQS, MGGG…DKTD, LQCG…KATS, and KDVQ…SEGE. Polar residues-rich tracts occupy residues 262 to 272 and 297 to 306; these read INSNPVSSQKQ and KSGTVSSQKQ. Over residues 505 to 521 the composition is skewed to low complexity; that stretch reads SLTSSEESSERPPLSTL. Composition is skewed to basic and acidic residues over residues 551–562 and 585–596; these read PAEKATSDDKDS and PAEKATSDEKDS. Polar residues-rich tracts occupy residues 597–619 and 645–657; these read VSNI…QKQS and GTVS…ASKA. Basic and acidic residues-rich tracts occupy residues 806-815, 874-883, 931-951, 976-985, 1044-1053, 1100-1121, and 1134-1152; these read RENKDGEKSR, SDEK…EISR, TSDE…EKSR, and ICDK…KDEQ. The segment covering 1175–1196 has biased composition (polar residues); the sequence is VSNIPTEIKDGQQSGTVSSQKQ. Coiled-coil stretches lie at residues 1383–1466, 1504–1531, 1573–1614, and 1727–1814; these read IKLK…TEEQ, KEDL…IKNQ, LAAL…ARCD, and NMLL…KRDD. Positions 1489–1508 are disordered; sequence KTGGNNSNQVSETDEKEDLL.

It belongs to the ANKRD36 family.

The chain is Ankyrin repeat domain-containing protein 36A (ANKRD36) from Homo sapiens (Human).